A 70-amino-acid polypeptide reads, in one-letter code: Large ribosomal subunit protein bL31 (70 aa).

Zn(2+) contacts are provided by C16, C18, C36, and C39.

This sequence belongs to the bacterial ribosomal protein bL31 family. Type A subfamily. In terms of assembly, part of the 50S ribosomal subunit. It depends on Zn(2+) as a cofactor.

Its function is as follows. Binds the 23S rRNA. The chain is Large ribosomal subunit protein bL31 from Tolumonas auensis (strain DSM 9187 / NBRC 110442 / TA 4).